The following is a 96-amino-acid chain: Co-chaperonin GroES (96 aa).

It belongs to the GroES chaperonin family. As to quaternary structure, heptamer of 7 subunits arranged in a ring. Interacts with the chaperonin GroEL.

The protein localises to the cytoplasm. In terms of biological role, together with the chaperonin GroEL, plays an essential role in assisting protein folding. The GroEL-GroES system forms a nano-cage that allows encapsulation of the non-native substrate proteins and provides a physical environment optimized to promote and accelerate protein folding. GroES binds to the apical surface of the GroEL ring, thereby capping the opening of the GroEL channel. The polypeptide is Co-chaperonin GroES (Haemophilus influenzae (strain ATCC 51907 / DSM 11121 / KW20 / Rd)).